The primary structure comprises 1997 residues: QEQHSQLEAAKTQVEKDMGEKISNLERELENANDLLCSTKRKGVMLSEEELTAMSPTAAAVAKVVKPGMKLTELYNAYVETQDKLLMEKQENKRITKYLDEIVKEVEAKSPILKRQREEYERMQKTVASLSAKLEQAMREIQRMQDETDKANKCSSVLERENQRLELQIKDLSQQIRVLLMELEEARGNFVQRDDVSSANISSSSEVITQHLVTYRNIEELQQQNQRLLVALRELGEAKEREEQESTSSRVSELEKELENALSELQQLREARSHQMTLVESIVRQRDMYRILLSQTTGVVLPAQDETALTSTPRKSPGVSLDGSTSTPAAVVVSDSTEAAEARAALKQLQEVFENYRKEKAENDRMLNEQHDKLQEQVTELRSQNTKISTQLEFASKRYEMLQDNVEGYRREITALQEKTQKLSATTQKQEQIINTLTHDLRAANEKLAVAEVRAENLKREKELLKMSEVRLTQERESLVAEQRGQNLLLTNLQTIQVTLERSETEIKQRYNNQIEKLEQELAQTKKKLEHEIEQRHLLGKNQDVQVLELKKQYEMELNLHNNTKELLKNSHKEISVLKQQLNSFELQLASRSSQQAANRDKDVNIEDVEEIKTKLRQSEELVNDLKERLKTATSNVEQYRSVVLNLEESLNKEKQVTEEVRKTIEVRLKESSEYQSQLEKKMMESEKEKQELRDEKHKTVEQMEQQVTQLRQSLSSLQAEVQQALQRATTSASNEQKAKQDCQEQARIAAEAQNKYERELMLHAADVEALQAAKKQLTSASAIRHKCEETAQKAGSQLLESRASWEERERMLKEEVSQIQSRCKDLEKQNGLLHEQIESLSKKMVTSVQEGALNMSFGEEGKSQEQVMEILRFVRREKEIAEARFEVAQVECLRYRQRIEHMERELHELQDSLNAEREKVQVTAKTMAQHEELMKKTETMNVLIESNKILREENEKQEQELQQLQAKIRKLESNILPLQESNAELSEKSGMLQAEKKLLEEDVRRWRARTQHLLSQQKDTDAEEYKKLLSEREVNTKRIQQLTEETGKLKTEVARTNASLNTCQSQLQSVKDDLTKIKAEKEKLQKELDAKILDIQEKIKTITQVKKIGRRYKTQYEELKVTHDKMVAEASSAKADQLQEQASQKEVQELKDSLQRSEAKVTTMQTTVDNMQKTLDDKDNEIKEHQEQISRMQAELSHLHKDLQDKTAQEEQMRQQINEKEEKTKKTLLVVRQKLAQNNGAKEQLTRENEDLKQKNANLEQQKEELEVRMSALRSQYDGRISRLERELREQQERHHEQRDEPQETTRIPQQRQITLQPTTAAGERGSANTSEPPTANIKPTPSKVTTAAVPVNKSTPRASIRPMVTPAAVSTPTSTPTATVMPTTQVDQQEVQSEGQMEHVPVFGSASGSVRSTSPNVQSSLPQPILTLQQQTQTTAFVQPTQQSHATIESPTQETPVEIVQSSPVERPTTSSTFGTYSATPSSSIPKRPREEEEDSTIETPEQIADDTDQQRTKKRKEEDIEEKTETEAVINTEDALHILTQCSNMEFPLEEEIVESPIQTSQVIESQAPEQLQNVQSTQDSLQDTPPKKTHNLVIVISDEENEDEQEGYEEEEQEDEEEDEDDAGIGEGDDSNEETGSADGNEDYEGDDAEEADGTDPDTETEDSMTAGEGNQRAADSQNIGDSGVVTAESTFSQETREQPSSASDRQGPRPPQSPRRQAHPPRLTILAPPQELGPPPAQRIPVARRQSVGRGLQLTPGVGGMQHFFDEEDRTVPSTPTLVVPHRTDGFAEAIHSPQVAGVPRFRFGPPEDMPQASSSHSDLGQLASQGGLGMYDTPLFLAHEEESGGRSVPTTPLQVAAPVSVFAENPAADTSDHASQSVPMVTTSTGNVPTSVDSGAADEGDEVFVEAESEGIGAESTLEMDTQQEEPVQPSEADLPSTSQDPPSSSIADTSSSKPKPRRVWLQPQPGGRPFKRSRGGSDFRGRGGINRSNI.

Coiled-coil stretches lie at residues 1–36 (QEQH…NDLL), 101–277 (EIVK…HQMT), 335–1103 (DSTE…IKTI), and 1129–1305 (AEAS…EPQE). 2 stretches are compositionally biased toward basic and acidic residues: residues 672 to 702 (SSEY…KTVE) and 1290 to 1305 (REQQ…EPQE). Disordered regions lie at residues 672 to 706 (SSEY…QMEQ), 1290 to 1352 (REQQ…AAVP), 1438 to 1529 (AFVQ…KTET), 1561 to 1752 (IQTS…RRQS), 1795 to 1832 (AIHS…ASQG), and 1870 to 1997 (ENPA…RSNI). Composition is skewed to polar residues over residues 1306 to 1321 (TTRI…QPTT), 1328 to 1347 (SANT…SKVT), and 1446 to 1487 (SHAT…SSSI). A compositionally biased stretch (basic and acidic residues) spans 1511–1529 (DQQRTKKRKEEDIEEKTET). Polar residues predominate over residues 1561–1587 (IQTSQVIESQAPEQLQNVQSTQDSLQD). Acidic residues-rich tracts occupy residues 1601–1637 (SDEE…DSNE) and 1644–1667 (GNED…ETED). Composition is skewed to polar residues over residues 1692–1709 (AEST…SASD), 1817–1830 (QASS…QLAS), and 1879–1899 (HASQ…TSVD). The span at 1902–1915 (AADEGDEVFVEAES) shows a compositional bias: acidic residues. Residues 1950-1959 (SSSIADTSSS) show a composition bias toward low complexity.

This sequence belongs to the TPR family. Homodimer. Part of the nuclear pore complex (NPC). Interacts with nuclear receptor KPNB1; the interaction occurs in a RanGTP-dependent manner. Associates with the Importin alpha/Importin beta receptor. In terms of tissue distribution, expressed in epithelial cells, oocytes and egg (at protein level).

Its subcellular location is the nucleus. The protein localises to the nucleus membrane. It is found in the nucleus envelope. It localises to the nuclear pore complex. The protein resides in the cytoplasm. Its subcellular location is the cytoskeleton. The protein localises to the spindle. It is found in the chromosome. It localises to the centromere. The protein resides in the kinetochore. Functionally, component of the nuclear pore complex (NPC), a complex required for the trafficking across the nuclear envelope. Functions as a scaffolding element in the nuclear phase of the NPC essential for normal nucleocytoplasmic transport of proteins and mRNAs, plays a role in the establishment of nuclear-peripheral chromatin compartmentalization in interphase, and in the mitotic spindle checkpoint signaling during mitosis. Involved in the quality control and retention of unspliced mRNAs in the nucleus. Implicated in nuclear export of mRNAs transcribed from heat shock gene promoters. May play a limited role in the regulation of nuclear protein export. May be involved in the formation and/or maintenance of NPC-associated perinuclear heterochromatin exclusion zones (HEZs). Finally, may act as a spatial regulator of the spindle-assembly checkpoint (SAC) response. The protein is Nucleoprotein TPR of Xenopus laevis (African clawed frog).